We begin with the raw amino-acid sequence, 110 residues long: PHD finger-like domain-containing protein 5B (110 aa).

It belongs to the PHF5 family.

The polypeptide is PHD finger-like domain-containing protein 5B (Arabidopsis thaliana (Mouse-ear cress)).